The primary structure comprises 276 residues: 2-dehydro-3-deoxyphosphooctonate aldolase (276 aa).

The protein belongs to the KdsA family.

The protein localises to the cytoplasm. The catalysed reaction is D-arabinose 5-phosphate + phosphoenolpyruvate + H2O = 3-deoxy-alpha-D-manno-2-octulosonate-8-phosphate + phosphate. It functions in the pathway carbohydrate biosynthesis; 3-deoxy-D-manno-octulosonate biosynthesis; 3-deoxy-D-manno-octulosonate from D-ribulose 5-phosphate: step 2/3. It participates in bacterial outer membrane biogenesis; lipopolysaccharide biosynthesis. This is 2-dehydro-3-deoxyphosphooctonate aldolase from Helicobacter acinonychis (strain Sheeba).